The chain runs to 411 residues: Phosphoglycerate kinase (411 aa).

The interval 1 to 24 is disordered; sequence MTGLCPLHQPSPLDHPHSGGTPMQ. Substrate contacts are provided by residues 41–43, arginine 56, 79–82, arginine 139, and arginine 172; these read DYN and HFGR. ATP contacts are provided by residues lysine 222, glycine 310, glutamate 341, and 369–372; that span reads GGDS.

It belongs to the phosphoglycerate kinase family. Monomer.

Its subcellular location is the cytoplasm. It catalyses the reaction (2R)-3-phosphoglycerate + ATP = (2R)-3-phospho-glyceroyl phosphate + ADP. It participates in carbohydrate degradation; glycolysis; pyruvate from D-glyceraldehyde 3-phosphate: step 2/5. The sequence is that of Phosphoglycerate kinase from Deinococcus radiodurans (strain ATCC 13939 / DSM 20539 / JCM 16871 / CCUG 27074 / LMG 4051 / NBRC 15346 / NCIMB 9279 / VKM B-1422 / R1).